The chain runs to 488 residues: Germacrene A hydroxylase (488 aa).

At 1–6 (MEVSLT) the chain is on the cytoplasmic side. Residues 7–23 (TSIALATIVFFLYKLLT) traverse the membrane as a helical; Signal-anchor for type II membrane protein segment. The Lumenal segment spans residues 24–488 (RPTSSKNRLP…KTELMLVPSF (465 aa)). N-linked (GlcNAc...) asparagine glycans are attached at residues N169, N260, N379, and N412. Residue C432 participates in heme binding.

It belongs to the cytochrome P450 family. Heme serves as cofactor. As to expression, expressed in leaf primordia.

It is found in the endoplasmic reticulum membrane. The enzyme catalyses (+)-(R)-germacrene A + 3 reduced [NADPH--hemoprotein reductase] + 3 O2 = germacra-1(10),4,11(13)-trien-12-oate + 3 oxidized [NADPH--hemoprotein reductase] + 4 H2O + 4 H(+). Its pathway is secondary metabolite biosynthesis; terpenoid biosynthesis. Its function is as follows. Involved in the biosynthesis of germacrene-derived sesquiterpene lactones. Catalyzes three consecutive oxidations of germacrene A to produce germacrene A acid. Could also catalyze the three-step oxidation of non-natural substrate amorphadiene to artemisinic acid. This chain is Germacrene A hydroxylase, found in Helianthus annuus (Common sunflower).